The sequence spans 692 residues: Elongation factor G (692 aa).

Residues 8–283 (NRIRNIGIAA…AVIDYLPAPT (276 aa)) enclose the tr-type G domain. GTP-binding positions include 17–24 (AHIDAGKT), 81–85 (DTPGH), and 135–138 (NKMD).

This sequence belongs to the TRAFAC class translation factor GTPase superfamily. Classic translation factor GTPase family. EF-G/EF-2 subfamily.

The protein resides in the cytoplasm. In terms of biological role, catalyzes the GTP-dependent ribosomal translocation step during translation elongation. During this step, the ribosome changes from the pre-translocational (PRE) to the post-translocational (POST) state as the newly formed A-site-bound peptidyl-tRNA and P-site-bound deacylated tRNA move to the P and E sites, respectively. Catalyzes the coordinated movement of the two tRNA molecules, the mRNA and conformational changes in the ribosome. The sequence is that of Elongation factor G from Helicobacter pylori (strain HPAG1).